A 428-amino-acid polypeptide reads, in one-letter code: Aspartate--tRNA(Asp) ligase (428 aa).

E170 contributes to the L-aspartate binding site. The tract at residues 192–195 (QLYK) is aspartate. R213 lines the L-aspartate pocket. Residues 213–215 (RAE) and E351 contribute to the ATP site. The Mg(2+) site is built by E351 and S354. Positions 354 and 358 each coordinate L-aspartate. Residue 399 to 402 (GFNR) participates in ATP binding.

The protein belongs to the class-II aminoacyl-tRNA synthetase family. Type 2 subfamily. Homodimer. Mg(2+) serves as cofactor.

It localises to the cytoplasm. The enzyme catalyses tRNA(Asp) + L-aspartate + ATP = L-aspartyl-tRNA(Asp) + AMP + diphosphate. Catalyzes the attachment of L-aspartate to tRNA(Asp) in a two-step reaction: L-aspartate is first activated by ATP to form Asp-AMP and then transferred to the acceptor end of tRNA(Asp). The chain is Aspartate--tRNA(Asp) ligase from Pyrobaculum aerophilum (strain ATCC 51768 / DSM 7523 / JCM 9630 / CIP 104966 / NBRC 100827 / IM2).